The sequence spans 617 residues: Chaperone protein HscA homolog (617 aa).

The disordered stretch occupies residues 1 to 23 (MALLQIAEPGQSSAPHEHKRAAG).

This sequence belongs to the heat shock protein 70 family.

Its function is as follows. Chaperone involved in the maturation of iron-sulfur cluster-containing proteins. Has a low intrinsic ATPase activity which is markedly stimulated by HscB. This is Chaperone protein HscA homolog from Vibrio vulnificus (strain YJ016).